Here is a 184-residue protein sequence, read N- to C-terminus: UPF0149 protein Pmen_0324 (184 aa).

It belongs to the UPF0149 family.

This chain is UPF0149 protein Pmen_0324, found in Ectopseudomonas mendocina (strain ymp) (Pseudomonas mendocina).